Consider the following 214-residue polypeptide: Redox-sensing transcriptional repressor Rex (214 aa).

A DNA-binding region (H-T-H motif) is located at residues 18–57 (LYYRLVNQLHEKGIDRVNSKTISEALDIDSASIRRDFSYF). Position 92-97 (92-97 (GVGNLG)) interacts with NAD(+).

Belongs to the transcriptional regulatory Rex family. As to quaternary structure, homodimer.

It is found in the cytoplasm. Functionally, modulates transcription in response to changes in cellular NADH/NAD(+) redox state. In Staphylococcus carnosus (strain TM300), this protein is Redox-sensing transcriptional repressor Rex.